The sequence spans 98 residues: Cystatin-B (98 aa).

M1 is subject to N-acetylmethionine. The short motif at 46–50 (QVVAG) is the Secondary area of contact element.

It belongs to the cystatin family. As to quaternary structure, able to form dimers stabilized by noncovalent forces.

The protein resides in the cytoplasm. It localises to the nucleus. This is an intracellular thiol proteinase inhibitor. Tightly binding reversible inhibitor of cathepsins L, H and B. The protein is Cystatin-B (CSTB) of Pan troglodytes (Chimpanzee).